The following is a 490-amino-acid chain: Serine/threonine-protein kinase PBL35 (490 aa).

2 disordered regions span residues 1–39 (MGFDSVKVMENWQSKTSNENEKKKKKRRRKKNNNVRNSE) and 80–103 (SAIVQSNDQPVGPVSSTTTTSNAE). Positions 14–39 (SKTSNENEKKKKKRRRKKNNNVRNSE) form a coiled coil. Basic residues predominate over residues 23–33 (KKKKRRRKKNN). The segment covering 94–103 (SSTTTTSNAE) has biased composition (low complexity). In terms of domain architecture, Protein kinase spans 136–422 (FRPESLLGEG…VEVLKPLPHL (287 aa)). Residues 142–150 (LGEGGFGCV) and K174 contribute to the ATP site. Y219 carries the phosphotyrosine modification. The Proton acceptor role is filled by D269. Phosphoserine occurs at positions 273 and 303. Residues T304 and T309 each carry the phosphothreonine modification. At Y317 the chain carries Phosphotyrosine. The disordered stretch occupies residues 442 to 490 (AGSGSGSGRGFGSRNGQPVFRTLSSPHGQAGSSPYRHQIPSPKPKGATT). Residues 444–454 (SGSGSGRGFGS) are compositionally biased toward gly residues. The span at 463–473 (TLSSPHGQAGS) shows a compositional bias: polar residues.

The protein belongs to the protein kinase superfamily. Ser/Thr protein kinase family. As to quaternary structure, interacts with SD129. In terms of processing, phosphorylated by SD129 in response to the pathogen-associated molecular pattern (PAMP) 3-OH-C10:0, a medium-chain 3-hydroxy fatty acid.

It localises to the cell membrane. The enzyme catalyses L-seryl-[protein] + ATP = O-phospho-L-seryl-[protein] + ADP + H(+). It catalyses the reaction L-threonyl-[protein] + ATP = O-phospho-L-threonyl-[protein] + ADP + H(+). In terms of biological role, involved in chitin-triggered immune signaling and is required for reactive oxygen species (ROS) production. Acts downstream of SD129 in defense signaling triggered by the pathogen-associated molecular pattern (PAMP) 3-OH-C10:0, a medium-chain 3-hydroxy fatty acid. This Arabidopsis thaliana (Mouse-ear cress) protein is Serine/threonine-protein kinase PBL35.